The following is a 450-amino-acid chain: 6-phospho-beta-glucosidase (450 aa).

Residue 5–73 coordinates NAD(+); sequence LKVVTIGGGS…VPMKLYKTLD (69 aa). Substrate-binding residues include R96 and N150. 2 residues coordinate Mn(2+): C172 and H203. Catalysis depends on Y258, which acts as the Proton acceptor.

Homotetramer. NAD(+) is required as a cofactor. Requires Mn(2+) as cofactor. Co(2+) serves as cofactor. It depends on Ni(2+) as a cofactor.

It carries out the reaction 6-phospho-beta-D-glucosyl-(1-&gt;4)-D-glucose + H2O = D-glucose 6-phosphate + D-glucose. Its function is as follows. Hydrolyzes a wide variety of P-beta-glucosides including cellobiose-6P, salicin-6P, arbutin-6P, gentiobiose-6P, methyl-beta-glucoside-6P and p-nitrophenyl-beta-D-glucopyranoside-6P. Is also able to hydrolyze phospho-N,N'-diacetylchitobiose. The protein is 6-phospho-beta-glucosidase (chbF) of Escherichia coli (strain K12).